We begin with the raw amino-acid sequence, 289 residues long: 4-hydroxy-tetrahydrodipicolinate synthase (289 aa).

T43 contributes to the pyruvate binding site. The active-site Proton donor/acceptor is the Y131. Residue K160 is the Schiff-base intermediate with substrate of the active site. V200 is a binding site for pyruvate.

Belongs to the DapA family. In terms of assembly, homotetramer; dimer of dimers.

The protein localises to the cytoplasm. The enzyme catalyses L-aspartate 4-semialdehyde + pyruvate = (2S,4S)-4-hydroxy-2,3,4,5-tetrahydrodipicolinate + H2O + H(+). Its pathway is amino-acid biosynthesis; L-lysine biosynthesis via DAP pathway; (S)-tetrahydrodipicolinate from L-aspartate: step 3/4. In terms of biological role, catalyzes the condensation of (S)-aspartate-beta-semialdehyde [(S)-ASA] and pyruvate to 4-hydroxy-tetrahydrodipicolinate (HTPA). In Methanococcus maripaludis (strain C6 / ATCC BAA-1332), this protein is 4-hydroxy-tetrahydrodipicolinate synthase.